Consider the following 250-residue polypeptide: DNA polymerase sliding clamp (250 aa).

Belongs to the PCNA family. As to quaternary structure, homotrimer. The subunits circularize to form a toroid; DNA passes through its center. Replication factor C (RFC) is required to load the toroid on the DNA.

In terms of biological role, sliding clamp subunit that acts as a moving platform for DNA processing. Responsible for tethering the catalytic subunit of DNA polymerase and other proteins to DNA during high-speed replication. The polypeptide is DNA polymerase sliding clamp (Methanococcus maripaludis (strain C7 / ATCC BAA-1331)).